The following is a 606-amino-acid chain: NADH-ubiquinone oxidoreductase chain 5 (606 aa).

16 helical membrane passes run 1–21 (MNLF…PIIM), 43–63 (AFII…EAII), 88–108 (IFIP…MWYM), 117–137 (FFKY…ANNL), 140–160 (LFIG…WWYG), 171–191 (AILY…WFLT), 209–229 (LNIP…QFGL), 241–261 (TPVS…FLLI), 273–293 (MQTL…ICAL), 310–330 (LGLM…LHIC), 366–386 (MPFT…MPFL), 413–433 (LIAT…VLLG), 457–477 (LLIG…PTTI), 488–508 (LTAL…NLAA), 513–533 (FMYP…PIVM), and 582–602 (GLVK…LILL).

It belongs to the complex I subunit 5 family. Core subunit of respiratory chain NADH dehydrogenase (Complex I) which is composed of 45 different subunits.

The protein localises to the mitochondrion inner membrane. It carries out the reaction a ubiquinone + NADH + 5 H(+)(in) = a ubiquinol + NAD(+) + 4 H(+)(out). In terms of biological role, core subunit of the mitochondrial membrane respiratory chain NADH dehydrogenase (Complex I) which catalyzes electron transfer from NADH through the respiratory chain, using ubiquinone as an electron acceptor. Essential for the catalytic activity and assembly of complex I. The chain is NADH-ubiquinone oxidoreductase chain 5 (MT-ND5) from Felis catus (Cat).